Consider the following 65-residue polypeptide: Large ribosomal subunit protein bL35 (65 aa).

The disordered stretch occupies residues 24-48 (RRKAGKSHLLEHKSSDKKRSMSKTT). Residues 31 to 42 (HLLEHKSSDKKR) show a composition bias toward basic and acidic residues.

The protein belongs to the bacterial ribosomal protein bL35 family.

This chain is Large ribosomal subunit protein bL35, found in Nostoc punctiforme (strain ATCC 29133 / PCC 73102).